A 132-amino-acid chain; its full sequence is Large ribosomal subunit protein bL19 (132 aa).

The protein belongs to the bacterial ribosomal protein bL19 family.

Functionally, this protein is located at the 30S-50S ribosomal subunit interface and may play a role in the structure and function of the aminoacyl-tRNA binding site. This Maricaulis maris (strain MCS10) (Caulobacter maris) protein is Large ribosomal subunit protein bL19.